The chain runs to 417 residues: Serine hydroxymethyltransferase (417 aa).

(6S)-5,6,7,8-tetrahydrofolate-binding positions include Leu121 and 125–127 (GHL). Lys229 carries the post-translational modification N6-(pyridoxal phosphate)lysine. A (6S)-5,6,7,8-tetrahydrofolate-binding site is contributed by 355–357 (SPF).

The protein belongs to the SHMT family. In terms of assembly, homodimer. Pyridoxal 5'-phosphate is required as a cofactor.

It localises to the cytoplasm. The enzyme catalyses (6R)-5,10-methylene-5,6,7,8-tetrahydrofolate + glycine + H2O = (6S)-5,6,7,8-tetrahydrofolate + L-serine. It participates in one-carbon metabolism; tetrahydrofolate interconversion. Its pathway is amino-acid biosynthesis; glycine biosynthesis; glycine from L-serine: step 1/1. Catalyzes the reversible interconversion of serine and glycine with tetrahydrofolate (THF) serving as the one-carbon carrier. This reaction serves as the major source of one-carbon groups required for the biosynthesis of purines, thymidylate, methionine, and other important biomolecules. Also exhibits THF-independent aldolase activity toward beta-hydroxyamino acids, producing glycine and aldehydes, via a retro-aldol mechanism. The polypeptide is Serine hydroxymethyltransferase (Xanthomonas oryzae pv. oryzae (strain MAFF 311018)).